The primary structure comprises 377 residues: Apelin receptor (377 aa).

At 1-28 (MEDDGYNYYGADNQSECDYADWTPSGAL) the chain is on the extracellular side. Asparagine 13 is a glycosylation site (N-linked (GlcNAc...) asparagine). 2 disulfides stabilise this stretch: cysteine 17/cysteine 279 and cysteine 100/cysteine 179. Residues 29-52 (IPAIYILVFLLGTTGNGLVLWTVF) form a helical membrane-spanning segment. At 53 to 62 (WSSREKRRSA) the chain is on the cytoplasmic side. Residues 63 to 84 (DIFIASLAVADLTFVVTLPLWA) form a helical membrane-spanning segment. Topologically, residues 85–97 (TYTYREFDWPFGT) are extracellular. The chain crosses the membrane as a helical span at residues 98–123 (FSCKLSSYLIFVNMYASVFCLTGLSF). At 124–144 (DRYLAIVRPVANARLRLRVSG) the chain is on the cytoplasmic side. The helical transmembrane segment at 145–162 (AVATAVLWVLAALLAVPV) threads the bilayer. Over 163 to 196 (MVFRSTDIPENSTKTQCYMDYSMVATSNSEWAWE) the chain is Extracellular. The N-linked (GlcNAc...) asparagine glycan is linked to asparagine 173. A helical transmembrane segment spans residues 197-221 (VGLGVSSTAVGFVVPFIIMLTCYFF). Residues 222 to 244 (IAQTIAGHFRKERIEGLRKRRRL) are Cytoplasmic-facing. Residues 245–268 (LSIIVVLVVTFALCWMPYHLVKTL) traverse the membrane as a helical segment. The Extracellular segment spans residues 269 to 287 (YMLGNLLHWPCDFDSFLMN). The chain crosses the membrane as a helical span at residues 288-310 (VFPYCTCISYVNSCLNPFLYAFF). Topologically, residues 311 to 377 (DPRFRRACTS…IPYSQETLVD (67 aa)) are cytoplasmic. Residues 335–349 (SSSAEKSASYSSGHS) show a composition bias toward low complexity. Residues 335–377 (SSSAEKSASYSSGHSQGPGPNMCKGGEPMHEKSIPYSQETLVD) form a disordered region.

It belongs to the G-protein coupled receptor 1 family. In terms of assembly, homodimer; dimerization inhibits APLNR-mediated G protein and beta-arrestin signaling pathways compared to monomeric APLNR. Widely expressed. Highest expression in the lung, lower in the heart, placenta, ovary, skeletal muscle, mammary gland, kidney and several structures in the brain as the hypothalamus (supraoptic and periventricular nuclei), pituitary, olfactory bulb and pineal gland.

The protein localises to the cell membrane. G protein-coupled receptor for peptide hormones apelin (APLN) and apelin receptor early endogenous ligand (APELA/ELA), that plays a role in the regulation of normal cardiovascular function and fluid homeostasis. When acting as apelin receptor, activates both G(i) protein pathway that inhibits adenylate cyclase activity, and the beta-arrestin pathway that promotes internalization of the receptor. APLNR/APJ also functions as mechanoreceptor that is activated by pathological stimuli in a G-protein-independent fashion to induce beta-arrestin signaling, hence eliciting cardiac hypertrophy. However, the presence of apelin ligand blunts cardiac hypertrophic induction from APLNR/APJ on response to pathological stimuli. Plays a key role in early development such as gastrulation, blood vessels formation and heart morphogenesis by acting as a APELA receptor. May promote angioblast migration toward the embryonic midline, i.e. the position of the future vessel formation, during vasculogenesis. Promotes sinus venosus (SV)-derived endothelial cells migration into the developing heart to promote coronary blood vessel development. Also plays a role in various processes in adults such as regulation of blood vessel formation, blood pressure, heart contractility and heart failure. In Rattus norvegicus (Rat), this protein is Apelin receptor.